The following is a 187-amino-acid chain: Flavin prenyltransferase UbiX (187 aa).

FMN contacts are provided by residues 9–11 (GAS), Ser-34, and Arg-123. Dimethylallyl phosphate is bound by residues Tyr-153 and Lys-169.

It belongs to the UbiX/PAD1 family.

The catalysed reaction is dimethylallyl phosphate + FMNH2 = prenylated FMNH2 + phosphate. In terms of biological role, flavin prenyltransferase that catalyzes the synthesis of the prenylated FMN cofactor (prenyl-FMN) for 4-hydroxy-3-polyprenylbenzoic acid decarboxylase UbiD. The prenyltransferase is metal-independent and links a dimethylallyl moiety from dimethylallyl monophosphate (DMAP) to the flavin N5 and C6 atoms of FMN. The protein is Flavin prenyltransferase UbiX of Helicobacter pylori (strain J99 / ATCC 700824) (Campylobacter pylori J99).